A 262-amino-acid polypeptide reads, in one-letter code: Proenkephalin-A-A (262 aa).

Positions 1–24 are cleaved as a signal peptide; the sequence is MGLEARHCCMFLLVFASLSVEIRA. Disulfide bonds link C26-C48, C30-C52, and C33-C65. 5 propeptides span residues 110–131, 139–177, 190–201, 211–221, and 229–253; these read MDELYHAEPEEDDAGGEILAKN, EYDSDRDAADLLRELLATSGDPESSIYHDNNSETPGEIN, STDLEDETSGIQ, VGRPEWWEDYQ, and TRFTDSFLPSDEDGESYSKENPDME.

It belongs to the opioid neuropeptide precursor family. The N-terminal domain contains 6 conserved cysteines thought to be involved in disulfide bonding and/or processing.

The protein localises to the secreted. Functionally, enkephalin neuropeptides compete with and mimic the effects of opiate drugs. They play a role in a number of physiologic functions, including pain perception and responses to stress. The protein is Proenkephalin-A-A (penk-a) of Xenopus laevis (African clawed frog).